The following is a 270-amino-acid chain: Protein tonB2 (270 aa).

Over 1 to 51 the chain is Cytoplasmic; that stretch reads MATPQPVDARTQPWRETPGGDLVALGRPVRQALHLVRHNPAQGRVLSRRET. A helical transmembrane segment spans residues 52-69; the sequence is ILLVLFALTLHGAVIHWL. Topologically, residues 70–270 are periplasmic; that stretch reads SQQRTPALPE…VSVPIDFKLN (201 aa). Residues 80-187 are disordered; it reads VPPQVPPMTI…LTPPSANAGY (108 aa). The span at 94 to 118 shows a compositional bias: pro residues; sequence PAPPVVEPPPPEPLPPVVEEPPPPV. Over residues 133–143 the composition is skewed to basic residues; that stretch reads PKPKPKPKPQP. The span at 144–180 shows a compositional bias: pro residues; sequence RPKPAPKAVEPAPPAPPQPAAPPAPPAPAAAPAPLTP. In terms of domain architecture, TonB C-terminal spans 180–270; sequence PPSANAGYLH…VSVPIDFKLN (91 aa).

The protein belongs to the TonB family. As to quaternary structure, homodimer. Forms a complex with the accessory proteins ExbB and ExbD.

The protein localises to the cell inner membrane. Its function is as follows. Interacts with outer membrane receptor proteins that carry out high-affinity binding and energy dependent uptake into the periplasmic space of specific substrates. It could act to transduce energy from the cytoplasmic membrane to specific energy-requiring processes in the outer membrane, resulting in the release into the periplasm of ligands bound by these outer membrane proteins. In Pseudomonas aeruginosa (strain ATCC 15692 / DSM 22644 / CIP 104116 / JCM 14847 / LMG 12228 / 1C / PRS 101 / PAO1), this protein is Protein tonB2 (tonB2).